Here is a 232-residue protein sequence, read N- to C-terminus: MQKYALHAYPVMALMVATLTGCAWIPAKPLVQGATTAQPIPGPVPVANGSIFQSAQPINYGYQPLFEDRRPRNIGDTLTIVLQENVSASKSSSANASRDGKTSFGFDTVPRYLQGLFGNSRADMEASGGNSFNGKGGANASNTFSGTLTVTVDQVLANGNLHVVGEKQIAINQGTEFIRFSGVVNPRTISGSNSVPSTQVADARIEYVGNGYLNEAQNMGWLQRFFLNLSPM.

Positions 1 to 21 (MQKYALHAYPVMALMVATLTG) are cleaved as a signal peptide. Cys-22 carries the N-palmitoyl cysteine lipid modification. Residue Cys-22 is the site of S-diacylglycerol cysteine attachment.

This sequence belongs to the FlgH family. In terms of assembly, the basal body constitutes a major portion of the flagellar organelle and consists of four rings (L,P,S, and M) mounted on a central rod.

The protein localises to the cell outer membrane. It is found in the bacterial flagellum basal body. Its function is as follows. Assembles around the rod to form the L-ring and probably protects the motor/basal body from shearing forces during rotation. This chain is Flagellar L-ring protein, found in Salmonella gallinarum (strain 287/91 / NCTC 13346).